The following is a 298-amino-acid chain: uncharacterized protein (298 aa).

The next 10 helical transmembrane spans lie at 5–23 (ILVS…YFST), 33–52 (IFGY…VTLF), 72–91 (ALSY…LFLW), 101–120 (VSFG…RVFF), 127–145 (FKFI…NIVL), 149–166 (LSWE…YFSI), 175–194 (LASF…YFAL), 207–229 (FIWG…YVIA), 238–260 (LGLL…GEQI), and 265–284 (YPLF…DGVY). The 132-residue stretch at 13 to 144 (FLFGYMYYFS…ATLGVISNIV (132 aa)) folds into the EamA domain.

The protein belongs to the EamA transporter family.

The protein localises to the cell membrane. This is an uncharacterized protein from Haemophilus influenzae (strain ATCC 51907 / DSM 11121 / KW20 / Rd).